The following is a 301-amino-acid chain: Probable alpha-L-glutamate ligase (301 aa).

The ATP-grasp domain occupies 104-287 (LQLLARKGIG…VATKVIEFIE (184 aa)). Residues Lys141, 178 to 179 (EF), Asp187, and 211 to 213 (RSN) contribute to the ATP site. Asp248, Glu260, and Asn262 together coordinate Mg(2+). Positions 248, 260, and 262 each coordinate Mn(2+).

This sequence belongs to the RimK family. Mg(2+) is required as a cofactor. Requires Mn(2+) as cofactor.

The polypeptide is Probable alpha-L-glutamate ligase (Nitrosococcus oceani (strain ATCC 19707 / BCRC 17464 / JCM 30415 / NCIMB 11848 / C-107)).